The sequence spans 410 residues: LL-diaminopimelate aminotransferase (410 aa).

Substrate-binding residues include Y15 and G42. Pyridoxal 5'-phosphate-binding positions include Y72, 108 to 109 (TK), Y132, N186, Y217, and 245 to 247 (SFS). K109, Y132, and N186 together coordinate substrate. K248 is modified (N6-(pyridoxal phosphate)lysine). Pyridoxal 5'-phosphate-binding residues include R256 and N291. Residues N291 and R387 each contribute to the substrate site.

It belongs to the class-I pyridoxal-phosphate-dependent aminotransferase family. LL-diaminopimelate aminotransferase subfamily. In terms of assembly, homodimer. Pyridoxal 5'-phosphate serves as cofactor.

The catalysed reaction is (2S,6S)-2,6-diaminopimelate + 2-oxoglutarate = (S)-2,3,4,5-tetrahydrodipicolinate + L-glutamate + H2O + H(+). Its pathway is amino-acid biosynthesis; L-lysine biosynthesis via DAP pathway; LL-2,6-diaminopimelate from (S)-tetrahydrodipicolinate (aminotransferase route): step 1/1. Functionally, involved in the synthesis of meso-diaminopimelate (m-DAP or DL-DAP), required for both lysine and peptidoglycan biosynthesis. Catalyzes the direct conversion of tetrahydrodipicolinate to LL-diaminopimelate. In Lawsonia intracellularis (strain PHE/MN1-00), this protein is LL-diaminopimelate aminotransferase.